A 159-amino-acid polypeptide reads, in one-letter code: Outer envelope pore protein 16-3, chloroplastic/mitochondrial (159 aa).

At Met-1 the chain carries N-acetylmethionine. The contains beta strands stretch occupies residues 1-65 (MDPAEMRYLE…IRTLKMMGTH (65 aa)). 3 helical membrane-spanning segments follow: residues 24 to 40 (ITGFGAGTIYGTILATW), 62 to 79 (MGTHGLTFAAIGGVYIGV), and 92 to 109 (FYNGAIGGFVAGASVLGY).

The protein belongs to the Tim17/Tim22/Tim23 family. Plastid outer envelope porin OEP16 (TC 1.B.30) subfamily. As to quaternary structure, homodimer and oligomers in membrane. Part of both the NADH-ubiquinone oxidoreductase complex I and of the TIM17:23 complex. Interacts with TIM23-2.

It localises to the plastid. Its subcellular location is the chloroplast outer membrane. It is found in the mitochondrion outer membrane. The protein localises to the mitochondrion inner membrane. Its function is as follows. Voltage-dependent high-conductance channel with a slight cation-selectivity; selective for amino acids but excludes triosephosphates or uncharged sugars. Non-essential amino acid-selective channel protein and translocation pore for NADPH:protochlorophyllide oxidoreductase A (PORA) and possibly PORB. The sequence is that of Outer envelope pore protein 16-3, chloroplastic/mitochondrial (OEP163) from Arabidopsis thaliana (Mouse-ear cress).